The primary structure comprises 319 residues: tRNA dimethylallyltransferase (319 aa).

26-33 (GPTAAGKS) contributes to the ATP binding site. Residue 28–33 (TAAGKS) coordinates substrate. The tract at residues 51–54 (DSMQ) is interaction with substrate tRNA.

It belongs to the IPP transferase family. In terms of assembly, monomer. It depends on Mg(2+) as a cofactor.

The enzyme catalyses adenosine(37) in tRNA + dimethylallyl diphosphate = N(6)-dimethylallyladenosine(37) in tRNA + diphosphate. Functionally, catalyzes the transfer of a dimethylallyl group onto the adenine at position 37 in tRNAs that read codons beginning with uridine, leading to the formation of N6-(dimethylallyl)adenosine (i(6)A). This Salinispora tropica (strain ATCC BAA-916 / DSM 44818 / JCM 13857 / NBRC 105044 / CNB-440) protein is tRNA dimethylallyltransferase.